A 2108-amino-acid chain; its full sequence is Mucin-5B (2108 aa).

A signal peptide spans M1–G21. Positions S36–P203 constitute a VWFD 1 domain. 2 disulfide bridges follow: C38-C166 and C60-C202. The segment at E196 to D219 is disordered. One can recognise a TIL 1 domain in the interval C304–C360. N-linked (GlcNAc...) (complex) asparagine glycosylation is present at N381. In terms of domain architecture, VWFD 2 spans G398 to F570. Cystine bridges form between C400-C534, C422-C569, and C443-C451. N528, N599, N680, and N772 each carry an N-linked (GlcNAc...) (complex) asparagine glycan. Residues C666 to C723 form the TIL 2 domain. The TIL 3 domain occupies G782 to C825. A VWFC 1 domain is found at C825–P897. The N-linked (GlcNAc...) (complex) asparagine glycan is linked to N855. The 171-residue stretch at G863 to S1033 folds into the VWFD 3 domain. Cystine bridges form between C865–C997, C887–C1032, C896–C994, and C914–C921. N-linked (GlcNAc...) (complex) asparagine glycosylation is found at N1036, N1219, N1371, and N1452. The 185-residue stretch at C1429–N1613 folds into the VWFD 4 domain. Cystine bridges form between C1431–C1573, C1453–C1612, and C1477–C1485. Residues N1567, N1639, N1792, N1807, and N1841 are each glycosylated (N-linked (GlcNAc...) (complex) asparagine). The VWFC 2 domain occupies C1761 to E1832. A VWFC 3 domain is found at G1870–Q1937. N1964 carries N-linked (GlcNAc...) (complex) asparagine glycosylation. 4 disulfides stabilise this stretch: C2010–C2066, C2031–C2080, C2042–C2096, and C2046–C2098. The CTCK domain occupies C2010–P2104.

As to quaternary structure, homomultimer; disulfide-linked. The N- and C-terminus mediate their assembly into higher order structures to form filaments. The CTCK domains of two polypeptides associate in the endoplasmic reticulum to generate intermolecularly disulfide-bonded dimers. These dimers progress to the Golgi apparatus, which is a more acidic environment than the endoplasmic reticulum. Under acidic conditions, the N-termini form non-covalent intermolecular interactions that juxtapose assemblies from different CTCK-linked dimers to produce long, disulfide-linked polymers that remain highly compact until secretion. Post-translationally, N-glycosylated. Complex glycosylation with bisecting N-acetylglucosamine. Contains mainly N-acetylglucosamine (3.1-8.5%), mannose (2.9-4.6%), a small amount of galactose (1.1-4.35) and sialic acid (0.3-1.3%). Most abundant glycan is composed of a GlcNAc(2)Man(3) core, a bisecting GlcNAc and another 3 GlcNAc antannae located on the mannoses of the core. Site Asn-1639 exists both in glycosylated and non-glycosylated forms.

The protein localises to the secreted. Functionally, ovomucin, the glycoprotein responsible for the gel properties of egg white, is composed for 2 subunits, alpha-ovomucin/MUC5B and beta-ovomucin/MUC6. This Gallus gallus (Chicken) protein is Mucin-5B (MUC5B).